We begin with the raw amino-acid sequence, 230 residues long: Ribonuclease HII (230 aa).

The RNase H type-2 domain occupies 28–217; sequence FRIAGIDEAG…VKEHLPSQPD (190 aa). 3 residues coordinate a divalent metal cation: D34, E35, and D126. A disordered region spans residues 211–230; it reads HLPSQPDCDTAGPSTGLFSF.

The protein belongs to the RNase HII family. The cofactor is Mn(2+). It depends on Mg(2+) as a cofactor.

The protein resides in the cytoplasm. It carries out the reaction Endonucleolytic cleavage to 5'-phosphomonoester.. Its function is as follows. Endonuclease that specifically degrades the RNA of RNA-DNA hybrids. The chain is Ribonuclease HII from Geobacter sp. (strain M21).